Here is a 110-residue protein sequence, read N- to C-terminus: Large ribosomal subunit protein uL22 (110 aa).

It belongs to the universal ribosomal protein uL22 family. In terms of assembly, part of the 50S ribosomal subunit.

Its function is as follows. This protein binds specifically to 23S rRNA; its binding is stimulated by other ribosomal proteins, e.g. L4, L17, and L20. It is important during the early stages of 50S assembly. It makes multiple contacts with different domains of the 23S rRNA in the assembled 50S subunit and ribosome. In terms of biological role, the globular domain of the protein is located near the polypeptide exit tunnel on the outside of the subunit, while an extended beta-hairpin is found that lines the wall of the exit tunnel in the center of the 70S ribosome. This Desulfotalea psychrophila (strain LSv54 / DSM 12343) protein is Large ribosomal subunit protein uL22.